A 161-amino-acid polypeptide reads, in one-letter code: Cyclic pyranopterin monophosphate synthase (161 aa).

Residues 73-75 (LCH) and 110-111 (ME) contribute to the substrate site. Aspartate 125 is an active-site residue.

The protein belongs to the MoaC family. As to quaternary structure, homohexamer; trimer of dimers.

The catalysed reaction is (8S)-3',8-cyclo-7,8-dihydroguanosine 5'-triphosphate = cyclic pyranopterin phosphate + diphosphate. It participates in cofactor biosynthesis; molybdopterin biosynthesis. In terms of biological role, catalyzes the conversion of (8S)-3',8-cyclo-7,8-dihydroguanosine 5'-triphosphate to cyclic pyranopterin monophosphate (cPMP). The polypeptide is Cyclic pyranopterin monophosphate synthase (Pseudomonas savastanoi pv. phaseolicola (strain 1448A / Race 6) (Pseudomonas syringae pv. phaseolicola (strain 1448A / Race 6))).